Reading from the N-terminus, the 488-residue chain is Katanin p60 ATPase-containing subunit A-like 1 (488 aa).

N-acetylmethionine is present on methionine 1. The disordered stretch occupies residues 128-179 (GAGARGLVGRAHQISKSDKAASRDKDYRARGRDDKARKNMQDGASDGEIPKF). Positions 142 to 167 (SKSDKAASRDKDYRARGRDDKARKNM) are enriched in basic and acidic residues. A Phosphoserine modification is found at serine 172. 246–253 (GPPGTGKT) contributes to the ATP binding site.

It belongs to the AAA ATPase family. Katanin p60 subunit A1 subfamily. A-like 1 sub-subfamily. As to quaternary structure, interacts with KATNB1 and KATNBL1.

It localises to the cytoplasm. The protein localises to the cytoskeleton. The protein resides in the spindle pole. It is found in the spindle. The enzyme catalyses n ATP + n H2O + a microtubule = n ADP + n phosphate + (n+1) alpha/beta tubulin heterodimers.. Its function is as follows. Regulates microtubule dynamics in Sertoli cells, a process that is essential for spermiogenesis and male fertility. Severs microtubules in an ATP-dependent manner, promoting rapid reorganization of cellular microtubule arrays. Has microtubule-severing activity in vitro. In Rattus norvegicus (Rat), this protein is Katanin p60 ATPase-containing subunit A-like 1 (Katnal1).